We begin with the raw amino-acid sequence, 956 residues long: Calsyntenin-3 (956 aa).

The signal sequence occupies residues 1–20; the sequence is MARMSFLSFLLFCLTSVAHG. The Extracellular portion of the chain corresponds to 21–850; it reads NKANKHKPWI…PHRNSVVPGA (830 aa). Cadherin domains are found at residues 30–151 and 152–271; these read IETE…SPVF and VERR…IPLF. 4 N-linked (GlcNAc...) asparagine glycosylation sites follow: Asn333, Asn353, Asn513, and Asn743. The chain crosses the membrane as a helical span at residues 851 to 871; that stretch reads ATVIIMVCVGFLVVMVILGVF. At 872–956 the chain is on the cytoplasmic side; sequence RIRSIHRRGE…EGRDSAPRRY (85 aa). The span at 921-937 shows a compositional bias: acidic residues; sequence GECEDEEEVVDSPDDTS. The tract at residues 921–956 is disordered; the sequence is GECEDEEEVVDSPDDTSDDQRIIIKKEGRDSAPRRY. Positions 938–956 are enriched in basic and acidic residues; that stretch reads DDQRIIIKKEGRDSAPRRY.

Belongs to the calsyntenin family. In terms of assembly, homooligomer and heterooligomer; mediates both homophilic and heterophilc interactions with clstn1 and clstn2 paralogs via cadherin domains. Interacts (via cadherin domains) with both alpha and beta isoforms of neurexins. As to expression, by 48 hours post-fertilization (hpf), widely expressed in the brain, with strong expression in the telencephalon and the midbrain. Not expressed in the optic tectum.

It localises to the postsynaptic cell membrane. The protein resides in the endoplasmic reticulum membrane. Its subcellular location is the golgi apparatus membrane. Functionally, synaptic adhesion molecule. Promotes synapse development by acting as a cell adhesion molecule at the postsynaptic membrane, which associates with presynaptic neurexins. The protein is Calsyntenin-3 of Danio rerio (Zebrafish).